The chain runs to 490 residues: ATP synthase subunit beta (490 aa).

ATP is bound at residue 175–182 (GGAGVGKT).

This sequence belongs to the ATPase alpha/beta chains family. In terms of assembly, F-type ATPases have 2 components, CF(1) - the catalytic core - and CF(0) - the membrane proton channel. CF(1) has five subunits: alpha(3), beta(3), gamma(1), delta(1), epsilon(1). CF(0) has three main subunits: a(1), b(2) and c(9-12). The alpha and beta chains form an alternating ring which encloses part of the gamma chain. CF(1) is attached to CF(0) by a central stalk formed by the gamma and epsilon chains, while a peripheral stalk is formed by the delta and b chains.

Its subcellular location is the cell membrane. It carries out the reaction ATP + H2O + 4 H(+)(in) = ADP + phosphate + 5 H(+)(out). Functionally, produces ATP from ADP in the presence of a proton gradient across the membrane. The catalytic sites are hosted primarily by the beta subunits. This chain is ATP synthase subunit beta, found in Acidothermus cellulolyticus (strain ATCC 43068 / DSM 8971 / 11B).